The chain runs to 185 residues: Protein GrpE (185 aa).

A disordered region spans residues 1–22; that stretch reads MTASQEPVDQAPESNEPAPAVP.

The protein belongs to the GrpE family. As to quaternary structure, homodimer.

The protein localises to the cytoplasm. In terms of biological role, participates actively in the response to hyperosmotic and heat shock by preventing the aggregation of stress-denatured proteins, in association with DnaK and GrpE. It is the nucleotide exchange factor for DnaK and may function as a thermosensor. Unfolded proteins bind initially to DnaJ; upon interaction with the DnaJ-bound protein, DnaK hydrolyzes its bound ATP, resulting in the formation of a stable complex. GrpE releases ADP from DnaK; ATP binding to DnaK triggers the release of the substrate protein, thus completing the reaction cycle. Several rounds of ATP-dependent interactions between DnaJ, DnaK and GrpE are required for fully efficient folding. This is Protein GrpE from Bordetella petrii (strain ATCC BAA-461 / DSM 12804 / CCUG 43448).